The chain runs to 87 residues: Small ribosomal subunit protein uS19 (87 aa).

This sequence belongs to the universal ribosomal protein uS19 family.

In terms of biological role, protein S19 forms a complex with S13 that binds strongly to the 16S ribosomal RNA. This Mycoplasma pneumoniae (strain ATCC 29342 / M129 / Subtype 1) (Mycoplasmoides pneumoniae) protein is Small ribosomal subunit protein uS19 (rpsS).